The sequence spans 119 residues: Beta-2-microglobulin (119 aa).

The first 20 residues, Met-1–Ala-20, serve as a signal peptide directing secretion. The 90-residue stretch at Pro-25–Lys-114 folds into the Ig-like C1-type domain. Cysteines 45 and 100 form a disulfide.

Belongs to the beta-2-microglobulin family. In terms of assembly, heterodimer of an alpha chain and a beta chain. Beta-2-microglobulin is the beta-chain of major histocompatibility complex class I molecules.

It is found in the secreted. Its function is as follows. Component of the class I major histocompatibility complex (MHC). Involved in the presentation of peptide antigens to the immune system. The sequence is that of Beta-2-microglobulin (B2M) from Chlorocebus aethiops (Green monkey).